The chain runs to 1007 residues: MEVFPFLLVLSVWWSRTWDSANADSIIHIGAIFDESAKKDDEVFRTAVGDLNQNEEILQTEKITFSVTFVDGNNPFQAVQEACELMNQGILALVSSIGCTSAGSLQSLADAMHIPHLFIQRSTAGTPRSGCGLTRSNRNDDYTLSVRPPVYLHDVILRVVTEYAWQKFIIFYDSEYDIRGIQEFLDKVSQQGMDVALQKVENNINKMITTLFDTMRIEELNRYRDTLRRAILVMNPATAKSFITEVVETNLVAFDCHWIIINEEINDVDVQELVRRSIGRLTIIRQTFPVPQNISQRCFRGNHRISSTLCDPKDPFAQNMEISNLYIYDTVLLLANAFHKKLEDRKWHSMASLSCIRKNSKPWQGGRSMLETIKKGGVSGLTGELEFGENGGNPNVHFEILGTNYGEELGRGVRKLGCWNPVTGLNGSLTDKKLENNMRGVVLRVVTVLEEPFVMVSENVLGKPKKYQGFSIDVLDALSNYLGFNYEIYVAPDHKYGSPQEDGTWNGLVGELVFKRADIGISALTITPDRENVVDFTTRYMDYSVGVLLRRAEKTVDMFACLAPFDLSLWACIAGTVLLVGLLVYLLNWLNPPRLQMGSMTSTTLYNSMWFVYGSFVQQGGEVPYTTLATRMMMGAWWLFALIVISSYTANLAAFLTITRIESSIQSLQDLSKQTEIPYGTVLDSAVYEHVRMKGLNPFERDSMYSQMWRMINRSNGSENNVLESQAGIQKVKYGNYAFVWDAAVLEYVAINDPDCSFYTIGNTVADRGYGIALQHGSPYRDVFSQRILELQQNGDMDILKHKWWPKNGQCDLYSSVDTKQKGGALDIKSFAGVFCILAAGIVLSCFIAMLETWWNKRKGSRVPSKEDDKEIDLEHLHRRVNSLCTDDDSPHKQFSTSSIDLTPLDIDTLPTRQALEQISDFRNTHITTTTFIPEQIQTLSRTLSAKAASGFTFGNVPEHRTGPFRHRAPNGGFFRSPIKTMSSIPYQPTPTLGLNLGNDPDRGTSI.

A signal peptide spans 1 to 23 (MEVFPFLLVLSVWWSRTWDSANA). The segment at 24–345 (DSIIHIGAIF…NAFHKKLEDR (322 aa)) is interaction with CBLN1 homotrimer. The Extracellular portion of the chain corresponds to 24–566 (DSIIHIGAIF…DMFACLAPFD (543 aa)). 3 disulfide bridges follow: C83–C355, C99–C131, and C298–C310. N-linked (GlcNAc...) asparagine glycosylation is present at N293. N426 is a glycosylation site (N-linked (GlcNAc...) asparagine). Ca(2+)-binding residues include E531, V534, and D535. Residues 567 to 587 (LSLWACIAGTVLLVGLLVYLL) traverse the membrane as a helical segment. At 588 to 635 (NWLNPPRLQMGSMTSTTLYNSMWFVYGSFVQQGGEVPYTTLATRMMMG) the chain is on the cytoplasmic side. Residues 636–656 (AWWLFALIVISSYTANLAAFL) traverse the membrane as a helical segment. The Extracellular portion of the chain corresponds to 657–830 (TITRIESSIQ…QKGGALDIKS (174 aa)). N-linked (GlcNAc...) asparagine glycosylation is found at N713 and N716. Positions 753, 755, and 757 each coordinate Ca(2+). Residues 831-851 (FAGVFCILAAGIVLSCFIAML) traverse the membrane as a helical segment. Residues 852-1007 (ETWWNKRKGS…GNDPDRGTSI (156 aa)) lie on the Cytoplasmic side of the membrane. The residue at position 883 (S883) is a Phosphoserine. Position 886 is a phosphothreonine (T886). A Phosphoserine modification is found at S890. The tract at residues 921–991 (DFRNTHITTT…MSSIPYQPTP (71 aa)) is interaction with AP4M1. Positions 1005 to 1007 (TSI) match the PDZ-binding motif. Phosphoserine is present on S1006.

This sequence belongs to the glutamate-gated ion channel (TC 1.A.10.1) family. GRID2 subfamily. Tetramer; dimer of dimers. Interacts with EML2, MAGI2 (via PDZ domains) and AP4M1. Interacts with BECN1, GOPC, GRID2IP, SHANK1 and SHANK2. Interacts with CBLN2, but not with CBLN4. Interacts with CBLN1 (via C1q domain); the interaction is CBLN1-NRX1 complex formation-dependent; CBLN1-binding is calcium-independent; CBLN1 hexamers anchor GRID2 N-terminal domain dimers to monomeric NRXN1 isoform beta; promotes synaptogenesis and mediates the D-Serine-dependent long term depression signals and AMPA receptor endocytosis.

It localises to the postsynaptic cell membrane. It catalyses the reaction Ca(2+)(in) = Ca(2+)(out). It carries out the reaction Na(+)(in) = Na(+)(out). In terms of biological role, member of the ionotropic glutamate receptor family, which plays a crucial role in synaptic organization and signal transduction in the central nervous system. Although it shares structural features with ionotropic glutamate receptors, does not bind glutamate as a primary ligand. Promotes synaptogenesis and mediates the D-Serine-dependent long term depression signals and AMPA receptor endocytosis of cerebellar parallel fiber-Purkinje cell (PF-PC) synapses through the NRX1B-CBLN1-GRID2 triad complex. In the presence of neurexins and cerebellins, forms cation-selective channels that are proposed to be gated by glycine and D-serine. However, recent research disputes this ligand-gated cation channel activity. Cation-selective ion channel activity can be triggered by GRM1 in Purkinje cells. The sequence is that of Glutamate receptor ionotropic, delta-2 (GRID2) from Homo sapiens (Human).